A 345-amino-acid polypeptide reads, in one-letter code: MPGALSGRRMLPSGLCLGRWQLLRTIRARGRGDPRELPSTPQVLCMKLYGNPKYHQALHYGTVEPQDEITVTYKHGLPLVTLTLPSRKERCQFVVKPMLSTVGSFLQDLQNEDKGIKTAAIITADGSEIPASTLMDTLLMTDFKLIINKLRYDIRCHKKEEPSGEHMTELENTKSLVHRLFTILHLEEIQKRRERHLMAKIDHLQEQLRPLEQVKAAIEARSEANTSGLLWAGLALLSVQGGALAWLTWWVYSWDIMEPVTFFLSFANSIVFFAYFIITRQNYTYSSLRSRQFLQFFHKKSQRRCFDVEQYNKLKEDLAEATESLESVRRSLRLRIQGEEASEKN.

A mitochondrion-targeting transit peptide spans 1–44 (MPGALSGRRMLPSGLCLGRWQLLRTIRARGRGDPRELPSTPQVL). Residues 188–221 (EIQKRRERHLMAKIDHLQEQLRPLEQVKAAIEAR) adopt a coiled-coil conformation. A run of 2 helical transmembrane segments spans residues 229-249 (LLWA…WLTW) and 259-279 (PVTF…FIIT). Positions 306 to 334 (FDVEQYNKLKEDLAEATESLESVRRSLRL) form a coiled coil.

This sequence belongs to the MCU (TC 1.A.77) family. Homooligomer. Associates with the uniplex complex, composed of MCU, MICU1, MICU2 and EMRE/SMDT1, inhibiting its activity. In terms of tissue distribution, detected in lung, brain and heart, and at lower levels in white fat, skeletal muscle and spleen. Detected at very low levels in kidney and liver. Highly expressed in macrophages during the progression of skeletal muscle regeneration.

Its subcellular location is the mitochondrion inner membrane. Its function is as follows. Negative regulator of the mitochondrial calcium uniporter (MCU), a channel that mediates calcium uptake into the mitochondrial matrix. MCUB is required to limit mitochondrial calcium overload during stress. Acts as a dominant-negative regulator that displaces MCU from the functional uniplex complex and thereby decreases the association of calcium sensors MICU1 and MICU2, preventing channel gating. Mitochondrial calcium homeostasis plays key roles in mitochondrial metabolism. Acts as an important regulator of mitochondrial metabolism in response to stress in muscle cells: induced in response to fasting, leading to restrict mitochondrial calcium uptake, resulting in reprogramming of mitochondria toward fatty acid oxidation preference. Acts as a regulator of macrophage polarization during skeletal muscle regeneration: inhibition of mitochondrial calcium uptake drives differentiation of macrophages with anti-inflammatory profile, promoting the differentiation and fusion of satellite cells. The sequence is that of Calcium uniporter regulatory subunit MCUb, mitochondrial from Mus musculus (Mouse).